The sequence spans 703 residues: Protein STRUBBELIG-RECEPTOR FAMILY 8 (703 aa).

The first 27 residues, 1 to 27 (MAIGDRAMFTVLLLFIASISGFSVVRC), serve as a signal peptide directing secretion. At 28–291 (VTDPSDVQAL…GKGLSGGVVT (264 aa)) the chain is on the extracellular side. LRR repeat units follow at residues 96-120 (LKSL…LPPN), 122-142 (TSLN…ISAM), 143-165 (GSLS…IFAD), 166-190 (HKSL…LSTV), 192-212 (TLSV…VLSG), 213-233 (LPLK…PKEL), and 234-256 (SSIQ…PQPE). 4 N-linked (GlcNAc...) asparagine glycosylation sites follow: Asn120, Asn130, Asn149, and Asn178. Asn226 is a glycosylation site (N-linked (GlcNAc...) asparagine). Residues 247–284 (DNVPASPQPERPGKKETPSGSKKPKIGSEEKSSDSGKG) form a disordered region. The helical transmembrane segment at 292–312 (GIVFGSLFVAGIIALVLYLCL) threads the bilayer. Residues 313–703 (HKKKRKVRGS…PEHEHVDISF (391 aa)) are Cytoplasmic-facing. Positions 395–672 (FSQENIIGEG…SEVVQQLVRL (278 aa)) constitute a Protein kinase domain. Residues 401-409 (IGEGSLGRV) and Lys423 each bind ATP.

It belongs to the protein kinase superfamily. Ser/Thr protein kinase family. In terms of tissue distribution, expressed in seedlings, roots, stems, leaves, flowers and siliques.

The protein localises to the membrane. This Arabidopsis thaliana (Mouse-ear cress) protein is Protein STRUBBELIG-RECEPTOR FAMILY 8 (SRF8).